The following is a 506-amino-acid chain: Putative transporter SVOPL (506 aa).

10 helical membrane passes run 57 to 77 (SIGF…ANIV), 104 to 124 (ALVS…CGYI), 133 to 153 (VVFG…FSTS), 190 to 210 (LLPL…VLGM), 220 to 240 (WMIR…MFIP), 297 to 317 (TSLL…GSVL), 362 to 382 (LISC…LNIV), 397 to 417 (FFFM…LLFL), 444 to 464 (IGMG…PFIA), and 472 to 492 (VILA…GVFF).

This sequence belongs to the major facilitator superfamily.

The protein localises to the membrane. The sequence is that of Putative transporter SVOPL (svopl) from Danio rerio (Zebrafish).